The chain runs to 140 residues: uncharacterized protein (140 aa).

This is an uncharacterized protein from Xylella fastidiosa (strain Temecula1 / ATCC 700964).